Consider the following 237-residue polypeptide: Phosphoribosylaminoimidazole-succinocarboxamide synthase (237 aa).

This sequence belongs to the SAICAR synthetase family.

It catalyses the reaction 5-amino-1-(5-phospho-D-ribosyl)imidazole-4-carboxylate + L-aspartate + ATP = (2S)-2-[5-amino-1-(5-phospho-beta-D-ribosyl)imidazole-4-carboxamido]succinate + ADP + phosphate + 2 H(+). It participates in purine metabolism; IMP biosynthesis via de novo pathway; 5-amino-1-(5-phospho-D-ribosyl)imidazole-4-carboxamide from 5-amino-1-(5-phospho-D-ribosyl)imidazole-4-carboxylate: step 1/2. This Escherichia coli O127:H6 (strain E2348/69 / EPEC) protein is Phosphoribosylaminoimidazole-succinocarboxamide synthase.